Reading from the N-terminus, the 95-residue chain is Selenoprotein K (95 aa).

A helical transmembrane segment spans residues 20 to 42 (LSFITDFFWGIAEFVVLFFRTLL). The interval 47–95 (KKRRGYGSSSDSRYDDGRGPPGNPPRRRMGRINHLQGPNPPPMAGGUGR) is disordered. Sec-93 is a non-standard amino acid (selenocysteine).

This sequence belongs to the selenoprotein K family. As to quaternary structure, interacts with DERL1, DERL2, DERL3 and SELENOS. The SELENOK-SELENOS complex interacts with VCP. Interacts with ZDHHC6. Cleaved by CAPN2/m-calpain in resting macrophages but not in activated macrophages. Macrophage activation up-regulates expression of the calpain inhibitor CAST/calpastatin, resulting in inhibition of CAPN2 activity. Post-translationally, truncated SELENOK proteins produced by failed UGA/Sec decoding are ubiquitinated by the CRL2(KLHDC2) complex, which recognizes the diglycine (Gly-Gly) at the C-terminus of truncated SELENOK proteins.

It is found in the endoplasmic reticulum membrane. Its subcellular location is the cell membrane. Its function is as follows. Required for Ca(2+) flux in immune cells and plays a role in T-cell proliferation and in T-cell and neutrophil migration. Involved in endoplasmic reticulum-associated degradation (ERAD) of soluble glycosylated proteins. Required for palmitoylation and cell surface expression of CD36 and involved in macrophage uptake of low-density lipoprotein and in foam cell formation. Together with ZDHHC6, required for palmitoylation of ITPR1 in immune cells, leading to regulate ITPR1 stability and function. Plays a role in protection of cells from ER stress-induced apoptosis. Protects cells from oxidative stress when overexpressed in cardiomyocytes. The chain is Selenoprotein K from Bos taurus (Bovine).